The chain runs to 450 residues: NADH-ubiquinone oxidoreductase chain 2 (450 aa).

13 helical membrane-spanning segments follow: residues 25-45 (GTITIMFTTMLFFLSMDIVAM), 58-78 (LTPYNLPLSFLMLSLIVMLLM), 90-110 (SPFYLLLLLTNMMGLLLFPLV), 113-133 (LIALYVVMELQSYSLYLLTGL), 145-165 (LLYFLMGGVASTIMLLASYFV), 186-206 (AFDYFDILLVALLFKMGMAPL), 219-239 (TYITAYISMVAKMSMVSWIFA), 248-268 (VTILFFYISLAMAAYKPLFQV), 272-292 (TMLAYSGMLNFSYILLSMMSY), 295-315 (AFYIYMIQYVLTHLILFLGML), 344-364 (LAFSLILALFSLIGMPPTPGF), 385-405 (AIVVCSVVATYYYANMIKVLF), and 414-436 (NFINPSLAFTMASATSLLFSFFM).

It belongs to the complex I subunit 2 family.

It is found in the mitochondrion inner membrane. The enzyme catalyses a ubiquinone + NADH + 5 H(+)(in) = a ubiquinol + NAD(+) + 4 H(+)(out). Core subunit of the mitochondrial membrane respiratory chain NADH dehydrogenase (Complex I) that is believed to belong to the minimal assembly required for catalysis. Complex I functions in the transfer of electrons from NADH to the respiratory chain. The immediate electron acceptor for the enzyme is believed to be ubiquinone. The protein is NADH-ubiquinone oxidoreductase chain 2 (ND2) of Debaryomyces hansenii (strain ATCC 36239 / CBS 767 / BCRC 21394 / JCM 1990 / NBRC 0083 / IGC 2968) (Yeast).